Consider the following 115-residue polypeptide: MKFVLLFGVFLLTLFSYSSSEMLDDFDQADEDELLSLIEKEEARAKECTPRFYDCSHDRHSCCRTELFKDVCTCFYPKRGDNEVCTCQPPKHLMYMEKAADKAKKFGGKIKKWFG.

The signal sequence occupies residues methionine 1–serine 20. Residues glutamate 21–arginine 44 constitute a propeptide that is removed on maturation. Intrachain disulfides connect cysteine 48/cysteine 63, cysteine 55/cysteine 72, cysteine 62/cysteine 87, and cysteine 74/cysteine 85.

This sequence belongs to the neurotoxin 19 (CSTX) family. 01 subfamily. Expressed by the venom gland.

The protein localises to the secreted. The protein is U3-lycotoxin-Ls1s of Lycosa singoriensis (Wolf spider).